Reading from the N-terminus, the 872-residue chain is Tetratricopeptide repeat protein 16 (872 aa).

The segment at 1-20 is disordered; the sequence is MTDSDEDALKVDQGPSQDIP. TPR repeat units lie at residues 61 to 94, 96 to 128, 136 to 169, 251 to 284, 285 to 318, 331 to 364, 365 to 398, and 406 to 439; these read VREY…DPQL, DFYA…QQDN, TFVL…QPEK, AQQA…NPLD, PSFF…VTED, LLTY…EQQE, KGLY…SPQD, and GLLQ…NPQK. 2 disordered regions span residues 557 to 640 and 653 to 872; these read ATPE…ETET and TAMT…YEVL. The segment covering 577 to 590 has biased composition (acidic residues); it reads KEEEEKEEEEQKEE. The span at 591–604 shows a compositional bias: basic and acidic residues; sequence EEQKKEEKKEEKKP. Polar residues-rich tracts occupy residues 610 to 640, 653 to 675, 689 to 709, and 721 to 754; these read KVAS…ETET, TAMT…NNRE, GQRQ…NFSK, and KTKA…SQGP. Over residues 762–783 the composition is skewed to basic residues; that stretch reads KTTRSPRQRPRKVKAARGRSWR. Composition is skewed to polar residues over residues 799-827 and 839-861; these read RSST…GQRT and GMSS…SKTE.

This Macaca fascicularis (Crab-eating macaque) protein is Tetratricopeptide repeat protein 16 (TTC16).